Consider the following 61-residue polypeptide: MANNTITVQLTRSPIGRLPKHRETVKGLGLRKVGQTRELEDTPSVRGMVNKVYYMVKVVGE.

It belongs to the universal ribosomal protein uL30 family. As to quaternary structure, part of the 50S ribosomal subunit.

The polypeptide is Large ribosomal subunit protein uL30 (Marinomonas sp. (strain MWYL1)).